The following is a 115-amino-acid chain: Phosphoribosyl-AMP cyclohydrolase (115 aa).

Asp-80 is a binding site for Mg(2+). Cys-81 is a Zn(2+) binding site. Mg(2+) contacts are provided by Asp-82 and Asp-84. Zn(2+) is bound by residues Cys-97 and Cys-104.

This sequence belongs to the PRA-CH family. As to quaternary structure, homodimer. It depends on Mg(2+) as a cofactor. Requires Zn(2+) as cofactor.

It localises to the cytoplasm. The catalysed reaction is 1-(5-phospho-beta-D-ribosyl)-5'-AMP + H2O = 1-(5-phospho-beta-D-ribosyl)-5-[(5-phospho-beta-D-ribosylamino)methylideneamino]imidazole-4-carboxamide. The protein operates within amino-acid biosynthesis; L-histidine biosynthesis; L-histidine from 5-phospho-alpha-D-ribose 1-diphosphate: step 3/9. Catalyzes the hydrolysis of the adenine ring of phosphoribosyl-AMP. The protein is Phosphoribosyl-AMP cyclohydrolase of Nocardia farcinica (strain IFM 10152).